The chain runs to 418 residues: Tyrosine--tRNA ligase (418 aa).

L-tyrosine is bound at residue Tyr34. Residues 39–48 (PTADSLHLGH) carry the 'HIGH' region motif. 2 residues coordinate L-tyrosine: Tyr169 and Gln173. Residues 229–233 (KFGKS) carry the 'KMSKS' region motif. Lys232 lines the ATP pocket. The S4 RNA-binding domain maps to 352-418 (LNIVDMLVTA…GKKKYAVLTY (67 aa)).

This sequence belongs to the class-I aminoacyl-tRNA synthetase family. TyrS type 1 subfamily. In terms of assembly, homodimer.

The protein localises to the cytoplasm. The catalysed reaction is tRNA(Tyr) + L-tyrosine + ATP = L-tyrosyl-tRNA(Tyr) + AMP + diphosphate + H(+). Its function is as follows. Catalyzes the attachment of tyrosine to tRNA(Tyr) in a two-step reaction: tyrosine is first activated by ATP to form Tyr-AMP and then transferred to the acceptor end of tRNA(Tyr). This chain is Tyrosine--tRNA ligase, found in Streptococcus equi subsp. zooepidemicus (strain H70).